A 478-amino-acid polypeptide reads, in one-letter code: V-type proton ATPase subunit H (478 aa).

The protein belongs to the V-ATPase H subunit family. In terms of assembly, V-ATPase is a heteromultimeric enzyme composed of a peripheral catalytic V1 complex (components A to H) attached to an integral membrane V0 proton pore complex (components: a, c, c', c'', d, e, f and VOA1). Interacts with YND1.

The protein resides in the vacuole membrane. Functionally, subunit of the V1 complex of vacuolar(H+)-ATPase (V-ATPase), a multisubunit enzyme composed of a peripheral complex (V1) that hydrolyzes ATP and a membrane integral complex (V0) that translocates protons. V-ATPase is responsible for acidifying and maintaining the pH of intracellular compartments. This subunit is essential for activity, but not assembly, of the enzyme complex. This subunit is also required for silencing the ATPase activity of V-ATPase when V1 is detached from V0. This is V-type proton ATPase subunit H from Saccharomyces cerevisiae (strain ATCC 204508 / S288c) (Baker's yeast).